A 92-amino-acid polypeptide reads, in one-letter code: Small ribosomal subunit protein uS19c (92 aa).

The protein belongs to the universal ribosomal protein uS19 family.

Its subcellular location is the plastid. The protein resides in the chloroplast. Functionally, protein S19 forms a complex with S13 that binds strongly to the 16S ribosomal RNA. This is Small ribosomal subunit protein uS19c (rps19) from Guillardia theta (Cryptophyte).